Consider the following 332-residue polypeptide: Anthranilate phosphoribosyltransferase (332 aa).

Residues G79, G82 to D83, T87, N89 to T92, K107 to S115, and S119 contribute to the 5-phospho-alpha-D-ribose 1-diphosphate site. G79 is an anthranilate binding site. Residue S91 participates in Mg(2+) binding. Residue N110 coordinates anthranilate. Position 165 (R165) interacts with anthranilate. 2 residues coordinate Mg(2+): D223 and E224.

This sequence belongs to the anthranilate phosphoribosyltransferase family. Homodimer. It depends on Mg(2+) as a cofactor.

It catalyses the reaction N-(5-phospho-beta-D-ribosyl)anthranilate + diphosphate = 5-phospho-alpha-D-ribose 1-diphosphate + anthranilate. Its pathway is amino-acid biosynthesis; L-tryptophan biosynthesis; L-tryptophan from chorismate: step 2/5. In terms of biological role, catalyzes the transfer of the phosphoribosyl group of 5-phosphorylribose-1-pyrophosphate (PRPP) to anthranilate to yield N-(5'-phosphoribosyl)-anthranilate (PRA). This is Anthranilate phosphoribosyltransferase from Vibrio parahaemolyticus serotype O3:K6 (strain RIMD 2210633).